The following is a 149-amino-acid chain: Large ribosomal subunit protein uL15 (149 aa).

Over residues 1–29 the composition is skewed to basic residues; it reads MVSHLKKTRKLRGHVSHGHGRVGKHRKGG. The interval 1–38 is disordered; the sequence is MVSHLKKTRKLRGHVSHGHGRVGKHRKGGCRGGRGKAG.

It belongs to the universal ribosomal protein uL15 family.

The protein is Large ribosomal subunit protein uL15 (RPL27A) of Tetrahymena thermophila.